We begin with the raw amino-acid sequence, 466 residues long: Histidine--tRNA ligase (466 aa).

This sequence belongs to the class-II aminoacyl-tRNA synthetase family. As to quaternary structure, homodimer.

The protein resides in the cytoplasm. It carries out the reaction tRNA(His) + L-histidine + ATP = L-histidyl-tRNA(His) + AMP + diphosphate + H(+). The chain is Histidine--tRNA ligase (hisS) from Bifidobacterium longum (strain NCC 2705).